Reading from the N-terminus, the 173-residue chain is Archaemetzincin (173 aa).

Histidine 130 is a binding site for Zn(2+). Glutamate 131 (proton acceptor) is an active-site residue. Residues histidine 134, histidine 140, cysteine 141, cysteine 146, cysteine 165, and cysteine 168 each contribute to the Zn(2+) site.

This sequence belongs to the peptidase M54 family. Monomer. Zn(2+) serves as cofactor.

Its function is as follows. Probable zinc metalloprotease whose natural substrate is unknown. The chain is Archaemetzincin from Haloarcula marismortui (strain ATCC 43049 / DSM 3752 / JCM 8966 / VKM B-1809) (Halobacterium marismortui).